The sequence spans 447 residues: Probable glycine dehydrogenase (decarboxylating) subunit 1 (447 aa).

It belongs to the GcvP family. N-terminal subunit subfamily. In terms of assembly, the glycine cleavage system is composed of four proteins: P, T, L and H. In this organism, the P 'protein' is a heterodimer of two subunits.

The enzyme catalyses N(6)-[(R)-lipoyl]-L-lysyl-[glycine-cleavage complex H protein] + glycine + H(+) = N(6)-[(R)-S(8)-aminomethyldihydrolipoyl]-L-lysyl-[glycine-cleavage complex H protein] + CO2. Its function is as follows. The glycine cleavage system catalyzes the degradation of glycine. The P protein binds the alpha-amino group of glycine through its pyridoxal phosphate cofactor; CO(2) is released and the remaining methylamine moiety is then transferred to the lipoamide cofactor of the H protein. The chain is Probable glycine dehydrogenase (decarboxylating) subunit 1 from Bacillus cereus (strain ATCC 10987 / NRS 248).